The sequence spans 74 residues: MRLFLSLPVLVVVLSMVLEGPTPAQGVLDVSNPFDVLEEFGKTLEDNVREFINLITQSELPAKTRDWFSEIFGK.

The N-terminal stretch at 1–26 is a signal peptide; the sequence is MRLFLSLPVLVVVLSMVLEGPTPAQG.

Belongs to the apolipoprotein C1 family.

Its subcellular location is the secreted. This is Apolipoprotein C-I, acidic form (APOC1A) from Colobus guereza (Mantled guereza).